The primary structure comprises 684 residues: Threonine--tRNA ligase (684 aa).

The region spanning 1–64 (MTAPNPSSLV…ESDTEVEPVA (64 aa)) is the TGS domain. The segment at 261–567 (DHRKLGVELD…LTEHYAGAFP (307 aa)) is catalytic. C366, H417, and H544 together coordinate Zn(2+).

Belongs to the class-II aminoacyl-tRNA synthetase family. As to quaternary structure, homodimer. Zn(2+) is required as a cofactor.

The protein resides in the cytoplasm. The enzyme catalyses tRNA(Thr) + L-threonine + ATP = L-threonyl-tRNA(Thr) + AMP + diphosphate + H(+). Its function is as follows. Catalyzes the attachment of threonine to tRNA(Thr) in a two-step reaction: L-threonine is first activated by ATP to form Thr-AMP and then transferred to the acceptor end of tRNA(Thr). Also edits incorrectly charged L-seryl-tRNA(Thr). The polypeptide is Threonine--tRNA ligase (Mycobacteroides abscessus (strain ATCC 19977 / DSM 44196 / CCUG 20993 / CIP 104536 / JCM 13569 / NCTC 13031 / TMC 1543 / L948) (Mycobacterium abscessus)).